The primary structure comprises 184 residues: ATP synthase subunit b, chloroplastic (184 aa).

The chain crosses the membrane as a helical span at residues 27-49; the sequence is LATNPINLSVVLGVLIFFGKGVL.

The protein belongs to the ATPase B chain family. In terms of assembly, F-type ATPases have 2 components, F(1) - the catalytic core - and F(0) - the membrane proton channel. F(1) has five subunits: alpha(3), beta(3), gamma(1), delta(1), epsilon(1). F(0) has four main subunits: a(1), b(1), b'(1) and c(10-14). The alpha and beta chains form an alternating ring which encloses part of the gamma chain. F(1) is attached to F(0) by a central stalk formed by the gamma and epsilon chains, while a peripheral stalk is formed by the delta, b and b' chains.

It is found in the plastid. It localises to the chloroplast thylakoid membrane. Functionally, f(1)F(0) ATP synthase produces ATP from ADP in the presence of a proton or sodium gradient. F-type ATPases consist of two structural domains, F(1) containing the extramembraneous catalytic core and F(0) containing the membrane proton channel, linked together by a central stalk and a peripheral stalk. During catalysis, ATP synthesis in the catalytic domain of F(1) is coupled via a rotary mechanism of the central stalk subunits to proton translocation. Its function is as follows. Component of the F(0) channel, it forms part of the peripheral stalk, linking F(1) to F(0). The chain is ATP synthase subunit b, chloroplastic from Chloranthus spicatus (Chulantree).